We begin with the raw amino-acid sequence, 320 residues long: cUMP-AMP-activated phospholipase (320 aa).

Residues 23–204 enclose the PNPLA domain; it reads LALDGGGAKG…CANNPTLFAI (182 aa). The GXGXXG signature appears at 27–32; sequence GGGAKG. A GXSXG motif is present at residues 59 to 63; the sequence is GTSTG. Ser61 acts as the Nucleophile in catalysis. The Proton acceptor role is filled by Asp191. The DGA/G motif lies at 191–193; the sequence is DGG.

It belongs to the patatin family.

It catalyses the reaction a 1,2-diacyl-sn-glycero-3-phosphocholine + H2O = a 2-acyl-sn-glycero-3-phosphocholine + a fatty acid + H(+). Its activity is regulated as follows. Phospholipase activity is specifically activated upon 3',3'-cUAMP binding. Is not activated by the other cyclic dinucleotides 3',3'-cGAMP, 3',3'-c-diAMP and 3',3'-c-diGMP. Therefore, is specifically activated by only the nucleotide synthesized from its adjacently encoded nucleotidyltransferase (CdnE). In terms of biological role, effector phospholipase of a CBASS antivirus system. CBASS (cyclic oligonucleotide-based antiphage signaling system) provides immunity against bacteriophage. The CD-NTase protein synthesizes cyclic nucleotides in response to infection; these serve as specific second messenger signals. The signals activate a diverse range of effectors, leading to bacterial cell death and thus abortive phage infection. A type II-A(UA) CBASS system. Its function is as follows. Phospholipase that is activated upon binding to the cyclic dinucleotide (CDN) second messenger 3',3'-cyclic UMP-AMP (3',3'-cUAMP). This chain is cUMP-AMP-activated phospholipase, found in Escherichia coli.